Consider the following 441-residue polypeptide: MAPNQRSRSLLQRHRGKVLISLTGIAALFTTGSVVVFFVKRWLYKQQLRITEQHFIKEQIKRRFEQTQEDSLYTIYELLPVWRMVLNENDLNLDSIVTQLKDQKNQLTRAKSSESRESSPLKSKAELWNELELKSLIKLVTVTYTVSSLILLTRLQLNILTRNEYLDSAIKLTMQQENCNKLQNRFYNWVTSWWSDPEDKADDAMVMAAKKSKKEGQEVYINEQAFLSLSWWILNKGWLSYNEIITNQIEIEFDGIHPRDTLTLEEFSSRLTNIFRNTNSQIFQQNNNNLTSILLPKDSSGQEFLLSQTLDADALTSFHSNTLVFNQLVNELTQCIESTATSIVLESLINESFHFIMNKVGIKTIAKKKPGQEDQQQYQMAVFAMSMKDCCQEMLQTTAGSSHSGSVNEYLATLDSVQPLDDLSASVYSNFGVSSSFSFKP.

The Peroxisomal portion of the chain corresponds to 1 to 17 (MAPNQRSRSLLQRHRGK). A helical transmembrane segment spans residues 18 to 39 (VLISLTGIAALFTTGSVVVFFV). Residues 40–441 (KRWLYKQQLR…GVSSSFSFKP (402 aa)) lie on the Cytoplasmic side of the membrane.

It belongs to the peroxin-3 family. In terms of assembly, interacts with MSP1; leading to inhibit the translocase activity of MSP1.

It is found in the peroxisome membrane. Functionally, involved in peroxisome biosynthesis. Acts as a regulator of MSP1 by inhibiting the ability of MSP1 to unfold target proteins. This is Peroxisomal biogenesis factor 3 (PEX3) from Saccharomyces cerevisiae (strain ATCC 204508 / S288c) (Baker's yeast).